We begin with the raw amino-acid sequence, 98 residues long: MSWAGSKRRQELPEDWELNYRLPVLSAAGWLCEVDGPGCVRAATDVDHKKPGNDHSRSNLQAICRVCHGKKSAAEGVARRRELKARRKRPEQRHPGRR.

The HNH domain maps to 41–73 (RAATDVDHKKPGNDHSRSNLQAICRVCHGKKSA). Residues 75–98 (EGVARRRELKARRKRPEQRHPGRR) are disordered. Residues 81-98 (RELKARRKRPEQRHPGRR) are compositionally biased toward basic residues.

The polypeptide is Gene 4 protein (4) (Mycobacterium (Mycobacteriophage D29)).